Consider the following 90-residue polypeptide: Small ribosomal subunit protein uS15 (90 aa).

It belongs to the universal ribosomal protein uS15 family. Part of the 30S ribosomal subunit. Forms a bridge to the 50S subunit in the 70S ribosome, contacting the 23S rRNA.

Functionally, one of the primary rRNA binding proteins, it binds directly to 16S rRNA where it helps nucleate assembly of the platform of the 30S subunit by binding and bridging several RNA helices of the 16S rRNA. Forms an intersubunit bridge (bridge B4) with the 23S rRNA of the 50S subunit in the ribosome. The sequence is that of Small ribosomal subunit protein uS15 from Wolinella succinogenes (strain ATCC 29543 / DSM 1740 / CCUG 13145 / JCM 31913 / LMG 7466 / NCTC 11488 / FDC 602W) (Vibrio succinogenes).